Reading from the N-terminus, the 44-residue chain is Photosystem II reaction center protein K (44 aa).

A propeptide spanning residues 1–7 is cleaved from the precursor; it reads MTTLLLA. A helical transmembrane segment spans residues 19–39; that stretch reads IVDVLPVIPLLFLLLAFVWQA.

Belongs to the PsbK family. PSII is composed of 1 copy each of membrane proteins PsbA, PsbB, PsbC, PsbD, PsbE, PsbF, PsbH, PsbI, PsbJ, PsbK, PsbL, PsbM, PsbT, PsbX, PsbY, PsbZ, Psb30/Ycf12, at least 3 peripheral proteins of the oxygen-evolving complex and a large number of cofactors. It forms dimeric complexes.

Its subcellular location is the plastid. It localises to the chloroplast thylakoid membrane. One of the components of the core complex of photosystem II (PSII). PSII is a light-driven water:plastoquinone oxidoreductase that uses light energy to abstract electrons from H(2)O, generating O(2) and a proton gradient subsequently used for ATP formation. It consists of a core antenna complex that captures photons, and an electron transfer chain that converts photonic excitation into a charge separation. The protein is Photosystem II reaction center protein K of Tupiella akineta (Green alga).